The following is a 160-amino-acid chain: Ribosomal RNA large subunit methyltransferase H (160 aa).

S-adenosyl-L-methionine-binding positions include Leu-76, Gly-108, and 127–132 (LGKMTW).

It belongs to the RNA methyltransferase RlmH family. As to quaternary structure, homodimer.

It is found in the cytoplasm. The catalysed reaction is pseudouridine(1915) in 23S rRNA + S-adenosyl-L-methionine = N(3)-methylpseudouridine(1915) in 23S rRNA + S-adenosyl-L-homocysteine + H(+). In terms of biological role, specifically methylates the pseudouridine at position 1915 (m3Psi1915) in 23S rRNA. In Rhizobium etli (strain ATCC 51251 / DSM 11541 / JCM 21823 / NBRC 15573 / CFN 42), this protein is Ribosomal RNA large subunit methyltransferase H.